A 591-amino-acid polypeptide reads, in one-letter code: Protein kinase C zeta type (591 aa).

The region spanning 15–98 (RVRLKAHYSG…DGLILHVFPS (84 aa)) is the PB1 domain. Positions 79-145 (AFRLAGQHRD…KRFNRRAYCG (67 aa)) are interaction with SQSTM1. A Phorbol-ester/DAG-type zinc finger spans residues 130-180 (GHLFQAKRFNRRAYCGQCSERIWGLARQGYRCINCKLLVHKRCHGLVPLTC). The 267-residue stretch at 251–517 (FDLIRVIGRG…FSDIKSHAFF (267 aa)) folds into the Protein kinase domain. Residues 257-265 (IGRGSYAKV) and lysine 280 contribute to the ATP site. Aspartate 375 (proton acceptor) is an active-site residue. Threonine 409 is modified (phosphothreonine; by PDPK1 and PI3K). The AGC-kinase C-terminal domain occupies 518-589 (RSIDWDLLEK…INPLLLSTEE (72 aa)). Threonine 559 is subject to Phosphothreonine. A Phosphoserine modification is found at serine 590.

It belongs to the protein kinase superfamily. AGC Ser/Thr protein kinase family. PKC subfamily. As to quaternary structure, interacts with PARD6A, PARD6B and PARD6G. Part of a complex with PARD3, PARD6A or PARD6B or PARD6G and CDC42 or RAC1. Interacts with ADAP1/CENTA1. Interacts directly with SQSTM1. Forms a ternary complex with SQSTM1 and KCNAB2. Forms another ternary complex with SQSTM1 and GABRR3. Forms a complex with SQSTM1 and MAP2K5. Interacts (via the protein kinase domain) with WWC1. Forms a tripartite complex with WWC1 and DDR1, but predominantly in the absence of collagen. Component of the Par polarity complex, composed of at least phosphorylated PRKCZ, PARD3 and TIAM1. Interacts with PDPK1 (via N-terminal region). Interacts with WDFY2 (via WD repeats 1-3). Interacts with VAMP2. Forms a complex with WDFY2 and VAMP2. Interacts with APPL1. Interacts with WWC1, WWC2 and WWC3. Post-translationally, CDH5 is required for its phosphorylation at Thr-409. Phosphorylated by protein kinase PDPK1; phosphorylation is inhibited by the apoptotic C-terminal cleavage product of PKN2. Phosphorylation at Thr-409 by PI3K activates the kinase.

It is found in the cytoplasm. Its subcellular location is the endosome. It localises to the cell junction. The protein localises to the membrane. The catalysed reaction is L-seryl-[protein] + ATP = O-phospho-L-seryl-[protein] + ADP + H(+). It carries out the reaction L-threonyl-[protein] + ATP = O-phospho-L-threonyl-[protein] + ADP + H(+). With respect to regulation, atypical PKCs (PRKCI and PRKCZ) exhibit an elevated basal enzymatic activity (that may be due to the interaction with SMG1 or SQSTM1) and are not regulated by diacylglycerol, phosphatidylserine, phorbol esters or calcium ions. Two specific sites, Thr-409 (activation loop of the kinase domain) and Thr-559 (turn motif), need to be phosphorylated for its full activation. Phosphatidylinositol 3,4,5-trisphosphate might be a physiological activator. Its function is as follows. Calcium- and diacylglycerol-independent serine/threonine-protein kinase that functions in phosphatidylinositol 3-kinase (PI3K) pathway and mitogen-activated protein (MAP) kinase cascade, and is involved in NF-kappa-B activation, mitogenic signaling, cell proliferation, cell polarity, inflammatory response and maintenance of long-term potentiation (LTP). Upon lipopolysaccharide (LPS) treatment in macrophages, or following mitogenic stimuli, functions downstream of PI3K to activate MAP2K1/MEK1-MAPK1/ERK2 signaling cascade independently of RAF1 activation. Required for insulin-dependent activation of AKT3, but may function as an adapter rather than a direct activator. Upon insulin treatment may act as a downstream effector of PI3K and contribute to the activation of translocation of the glucose transporter SLC2A4/GLUT4 and subsequent glucose transport in adipocytes. In EGF-induced cells, binds and activates MAP2K5/MEK5-MAPK7/ERK5 independently of its kinase activity and can activate JUN promoter through MEF2C. Through binding with SQSTM1/p62, functions in interleukin-1 signaling and activation of NF-kappa-B with the specific adapters RIPK1 and TRAF6. Participates in TNF-dependent transactivation of NF-kappa-B by phosphorylating and activating IKBKB kinase, which in turn leads to the degradation of NF-kappa-B inhibitors. In migrating astrocytes, forms a cytoplasmic complex with PARD6A and is recruited by CDC42 to function in the establishment of cell polarity along with the microtubule motor and dynein. In association with FEZ1, stimulates neuronal differentiation in PC12 cells. In the inflammatory response, is required for the T-helper 2 (Th2) differentiation process, including interleukin production, efficient activation of JAK1 and the subsequent phosphorylation and nuclear translocation of STAT6. May be involved in development of allergic airway inflammation (asthma), a process dependent on Th2 immune response. In the NF-kappa-B-mediated inflammatory response, can relieve SETD6-dependent repression of NF-kappa-B target genes by phosphorylating the RELA subunit at 'Ser-311'. Phosphorylates VAMP2 in vitro. Phosphorylates and activates LRRK1, which phosphorylates RAB proteins involved in intracellular trafficking. The sequence is that of Protein kinase C zeta type (PRKCZ) from Oryctolagus cuniculus (Rabbit).